A 59-amino-acid polypeptide reads, in one-letter code: Large ribosomal subunit protein bL32 (59 aa).

Positions 1–16 (MAVPKRKVSPHRRGNR) are enriched in basic residues. Residues 1–20 (MAVPKRKVSPHRRGNRRAHD) form a disordered region.

It belongs to the bacterial ribosomal protein bL32 family.

This is Large ribosomal subunit protein bL32 from Erythrobacter litoralis (strain HTCC2594).